We begin with the raw amino-acid sequence, 368 residues long: UPF0284 protein SYNPCC7002_A1742 (368 aa).

This sequence belongs to the UPF0284 family.

The protein is UPF0284 protein SYNPCC7002_A1742 of Picosynechococcus sp. (strain ATCC 27264 / PCC 7002 / PR-6) (Agmenellum quadruplicatum).